Reading from the N-terminus, the 251-residue chain is Probable phosphatase Sputw3181_2734 (251 aa).

His-8, His-10, His-16, His-41, Glu-74, His-102, His-132, Asp-193, and His-195 together coordinate Zn(2+).

It belongs to the PHP family. Requires Zn(2+) as cofactor.

In Shewanella sp. (strain W3-18-1), this protein is Probable phosphatase Sputw3181_2734.